Here is a 1025-residue protein sequence, read N- to C-terminus: Protein HIRA (1025 aa).

7 WD repeats span residues 11–53 (HNGK…KEED), 68–107 (NHLA…GPST), 129–168 (NHTG…EMVT), 172–211 (GHTG…MEAN), 220–263 (GGTT…TNMD), 266–322 (GHRK…PLVV), and 326–367 (LFDK…DPLS). Disordered stretches follow at residues 408–433 (ERRN…KLNS), 490–534 (GSSM…AAKV), 563–614 (RFTE…EDKM), and 634–678 (GAEV…AAGA). Polar residues-rich tracts occupy residues 412 to 433 (STQA…KLNS) and 490 to 508 (GSSM…SSPG). Residues 588-614 (ERPKESTPMQKDVKSKEDTSSDSEDKM) are compositionally biased toward basic and acidic residues.

Belongs to the WD repeat HIR1 family.

It localises to the nucleus. Its function is as follows. Required for replication-independent chromatin assembly and for the periodic repression of histone gene transcription during the cell cycle. In Takifugu rubripes (Japanese pufferfish), this protein is Protein HIRA (hira).